Reading from the N-terminus, the 533-residue chain is Cytochrome P450 monooxygenase ltmK (533 aa).

A helical membrane pass occupies residues 27–47 (VHWLQVIVALLVLIVCIFLYW). N-linked (GlcNAc...) asparagine glycosylation occurs at asparagine 116. Residue cysteine 473 participates in heme binding. An N-linked (GlcNAc...) asparagine glycan is attached at asparagine 528.

This sequence belongs to the cytochrome P450 family. Heme serves as cofactor.

Its subcellular location is the membrane. Its pathway is secondary metabolite biosynthesis. Its function is as follows. Cytochrome P450 monooxygenase; part of the gene clusters that mediates the biosynthesis of lolitrems, indole-diterpene mycotoxins that are potent tremorgens in mammals, and are synthesized by clavicipitaceous fungal endophytes in association with their grass hosts. The geranylgeranyl diphosphate (GGPP) synthase ltmG is proposed to catalyze the first step in lolitrem biosynthesis. LtmG catalyzes a series of iterative condensations of isopentenyl diphosphate (IPP) with dimethylallyl diphosphate (DMAPP), geranyl diphosphate (GPP), and farnesyl diphosphate (FPP), to form GGPP. GGPP then condenses with indole-3-glycerol phosphate to form 3-geranylgeranylindole, an acyclic intermediate, to be incorporated into paxilline. Either ltmG or ltmC could be responsible for this step, as both are putative prenyl transferases. The FAD-dependent monooxygenase ltmM then catalyzes the epoxidation of the two terminal alkenes of the geranylgeranyl moiety, which is subsequently cyclized by ltmB, to paspaline. The cytochrome P450 monooxygenases ltmQ and ltmP can sequentially oxidize paspaline to terpendole E and terpendole F. Alternatively, ltmP converts paspaline to an intermediate which is oxidized by ltmQ to terpendole F. LtmF, ltmK, ltmE and ltmJ appear to be unique to the epichloe endophytes. The prenyltransferase ltmF is involved in the 27-hydroxyl-O-prenylation. The cytochrome P450 monooxygenase ltmK is required for the oxidative acetal ring formation. The multi-functional prenyltransferase ltmE is required for C20- and C21-prenylations of the indole ring of paspalanes and acts together with the cytochrome P450 monooxygenase ltmJ to yield lolitremanes by multiple oxidations and ring closures. The stereoisomer pairs of lolitriol and lolitrem N or lolitrem B and lolitrem F may be attributed to variations in the way in which ring closure can occur under the action of ltmJ. While the major product of this pathway is lolitrem B, the prenyl transferases and cytochrome P450 monooxygenases identified in this pathway have a remarkable versatility in their regio- and stereo-specificities to generate a diverse range of metabolites that are products of a metabolic grid rather than a linear pathway. This is Cytochrome P450 monooxygenase ltmK from Epichloe festucae var. lolii (Neotyphodium lolii).